Consider the following 588-residue polypeptide: Cyclomaltodextrinase (588 aa).

Substrate-binding residues include His247 and Arg326. The active-site Nucleophile is Asp328. The active-site Proton donor is Glu357. Substrate is bound by residues 423-424, Asp468, and Arg472; that span reads HD.

This sequence belongs to the glycosyl hydrolase 13 family. In terms of assembly, exists as a monomer or a homodimer in solution. Homodimer is more active and stable than the monomer.

The enzyme catalyses cyclomaltodextrin + H2O = linear maltodextrin. With respect to regulation, no metal dependence, but Mn(2+) increases the activity with alpha-cyclodextrin as substrate. No effect on the activity with presence or absence of Ca(2+), Zn(2+), Tween-20 or EDTA. Hydrolyzes alpha-, beta- and gamma-cyclodextrins with the highest activity with alpha-cyclodextrin (cyclomaltohexaose). Pullulan is the preferred substrate from linear substrates. Maltose is a major product of these reactions. Is also able to hydrolyze maltotriose and acarbose, and transglycosylate their hydrolytic products. Major reaction products of maltotriose and of acarbose are maltose and glucose, and glucose and pseudotrisaccharide, respectively. No activity with glucose or maltose as substrate. The protein is Cyclomaltodextrinase of Geobacillus thermopakistaniensis (strain MAS1).